Reading from the N-terminus, the 341-residue chain is Phosphate acyltransferase (341 aa).

This sequence belongs to the PlsX family. Homodimer. Probably interacts with PlsY.

It is found in the cytoplasm. It carries out the reaction a fatty acyl-[ACP] + phosphate = an acyl phosphate + holo-[ACP]. Its pathway is lipid metabolism; phospholipid metabolism. Catalyzes the reversible formation of acyl-phosphate (acyl-PO(4)) from acyl-[acyl-carrier-protein] (acyl-ACP). This enzyme utilizes acyl-ACP as fatty acyl donor, but not acyl-CoA. In Pseudoalteromonas atlantica (strain T6c / ATCC BAA-1087), this protein is Phosphate acyltransferase.